Here is a 206-residue protein sequence, read N- to C-terminus: Ribosome maturation factor RimP (206 aa).

It belongs to the RimP family.

The protein localises to the cytoplasm. Its function is as follows. Required for maturation of 30S ribosomal subunits. The protein is Ribosome maturation factor RimP of Paracoccus denitrificans (strain Pd 1222).